Reading from the N-terminus, the 156-residue chain is Protein-export protein SecB (156 aa).

This sequence belongs to the SecB family. Homotetramer, a dimer of dimers. One homotetramer interacts with 1 SecA dimer.

Its subcellular location is the cytoplasm. In terms of biological role, one of the proteins required for the normal export of preproteins out of the cell cytoplasm. It is a molecular chaperone that binds to a subset of precursor proteins, maintaining them in a translocation-competent state. It also specifically binds to its receptor SecA. The polypeptide is Protein-export protein SecB (Yersinia enterocolitica serotype O:8 / biotype 1B (strain NCTC 13174 / 8081)).